The following is an 88-amino-acid chain: DNA-directed RNA polymerase subunit omega (88 aa).

The protein belongs to the RNA polymerase subunit omega family. In terms of assembly, the RNAP catalytic core consists of 2 alpha, 1 beta, 1 beta' and 1 omega subunit. When a sigma factor is associated with the core the holoenzyme is formed, which can initiate transcription.

It carries out the reaction RNA(n) + a ribonucleoside 5'-triphosphate = RNA(n+1) + diphosphate. Its function is as follows. Promotes RNA polymerase assembly. Latches the N- and C-terminal regions of the beta' subunit thereby facilitating its interaction with the beta and alpha subunits. In Thermobifida fusca (strain YX), this protein is DNA-directed RNA polymerase subunit omega.